The following is a 622-amino-acid chain: DNA mismatch repair protein MutL (622 aa).

It belongs to the DNA mismatch repair MutL/HexB family.

Its function is as follows. This protein is involved in the repair of mismatches in DNA. It is required for dam-dependent methyl-directed DNA mismatch repair. May act as a 'molecular matchmaker', a protein that promotes the formation of a stable complex between two or more DNA-binding proteins in an ATP-dependent manner without itself being part of a final effector complex. This is DNA mismatch repair protein MutL from Actinobacillus pleuropneumoniae serotype 3 (strain JL03).